The chain runs to 264 residues: Orotidine 5'-phosphate decarboxylase (264 aa).

Residues Asp-37, 59-61 (KTH), 91-100 (DRKFADIGNT), Tyr-217, and Arg-235 contribute to the substrate site. Catalysis depends on Lys-93, which acts as the Proton donor.

It belongs to the OMP decarboxylase family.

The catalysed reaction is orotidine 5'-phosphate + H(+) = UMP + CO2. It functions in the pathway pyrimidine metabolism; UMP biosynthesis via de novo pathway; UMP from orotate: step 2/2. The protein is Orotidine 5'-phosphate decarboxylase (URA3) of Torulaspora delbrueckii (Yeast).